A 199-amino-acid polypeptide reads, in one-letter code: NAD(P)H-quinone oxidoreductase subunit 6, chloroplastic (199 aa).

Helical transmembrane passes span 13–33 (AILL…VLFT), 35–55 (IVYS…LYIL), 64–84 (VQIL…VMLI), 96–118 (WTVG…IAAI), and 157–177 (LPFE…ITMA).

This sequence belongs to the complex I subunit 6 family. As to quaternary structure, NDH is composed of at least 16 different subunits, 5 of which are encoded in the nucleus.

It localises to the plastid. The protein localises to the chloroplast thylakoid membrane. The catalysed reaction is a plastoquinone + NADH + (n+1) H(+)(in) = a plastoquinol + NAD(+) + n H(+)(out). It carries out the reaction a plastoquinone + NADPH + (n+1) H(+)(in) = a plastoquinol + NADP(+) + n H(+)(out). Its function is as follows. NDH shuttles electrons from NAD(P)H:plastoquinone, via FMN and iron-sulfur (Fe-S) centers, to quinones in the photosynthetic chain and possibly in a chloroplast respiratory chain. The immediate electron acceptor for the enzyme in this species is believed to be plastoquinone. Couples the redox reaction to proton translocation, and thus conserves the redox energy in a proton gradient. This is NAD(P)H-quinone oxidoreductase subunit 6, chloroplastic (ndhG) from Huperzia lucidula (Shining clubmoss).